A 579-amino-acid polypeptide reads, in one-letter code: Polyadenylate-binding protein, cytoplasmic and nuclear (579 aa).

Over residues M1–E10 the composition is skewed to basic and acidic residues. The tract at residues M1–T32 is disordered. RRM domains are found at residues A35–R113, G123–S200, T216–K293, and I319–R396. The PABC domain maps to G487 to Q566. The segment at A560–A579 is disordered. The segment covering Q566–A579 has biased composition (low complexity).

The protein belongs to the polyadenylate-binding protein type-1 family.

The protein localises to the cytoplasm. It localises to the nucleus. Its function is as follows. Binds the poly(A) tail of mRNA. Appears to be an important mediator of the multiple roles of the poly(A) tail in mRNA biogenesis, stability and translation. In the nucleus, involved in both mRNA cleavage and polyadenylation. Is also required for efficient mRNA export to the cytoplasm. Acts in concert with a poly(A)-specific nuclease (PAN) to affect poly(A) tail shortening, which may occur concomitantly with either nucleocytoplasmic mRNA transport or translational initiation. In the cytoplasm, stimulates translation initiation and regulates mRNA decay through translation termination-coupled poly(A) shortening, probably mediated by PAN. The protein is Polyadenylate-binding protein, cytoplasmic and nuclear (PAB1) of Candida glabrata (strain ATCC 2001 / BCRC 20586 / JCM 3761 / NBRC 0622 / NRRL Y-65 / CBS 138) (Yeast).